A 2812-amino-acid chain; its full sequence is Serine/threonine-protein kinase tel1 (2812 aa).

One can recognise an FAT domain in the interval 1773–2347 (VAASTAYDCH…LHVLFSLVSN (575 aa)). The PI3K/PI4K catalytic domain maps to 2449-2758 (FDDTIHFASG…DASRDPKIQR (310 aa)). The segment at 2455-2461 (FASGINA) is G-loop. The tract at residues 2627-2635 (GLGDRHGQN) is catalytic loop. Positions 2647 to 2671 (HIDLGIAFEQGKKLPVPECVPFRLT) are activation loop. Over residues 2739–2749 (NQPESGNITTD) the composition is skewed to polar residues. The disordered stretch occupies residues 2739 to 2763 (NQPESGNITTDASRDPKIQRNNVSG). One can recognise an FATC domain in the interval 2780–2812 (STLSVEASVGELIRIAQDPSYLALMFCGWSAFQ).

The protein belongs to the PI3/PI4-kinase family. ATM subfamily. Interacts with nbs1. This interaction is required for phosphorylation of histone H2A.

The protein resides in the nucleus. The protein localises to the chromosome. Its subcellular location is the telomere. It carries out the reaction L-seryl-[protein] + ATP = O-phospho-L-seryl-[protein] + ADP + H(+). The enzyme catalyses L-threonyl-[protein] + ATP = O-phospho-L-threonyl-[protein] + ADP + H(+). In terms of biological role, serine/threonine protein kinase which activates checkpoint signaling upon genotoxic stresses such as ionizing radiation (IR), ultraviolet light (UV), or DNA replication stalling, thereby acting as a DNA damage sensor. Recognizes the substrate consensus sequence [ST]-Q. Phosphorylates histone H2A to form H2AS128ph (gamma-H2A) at sites of DNA damage, involved in the regulation of DNA damage response mechanism. Undirectly involved in the phosphorylation of rad32 which is necessary for its telomere function. Required for the control of telomere length and genome stability. In Schizosaccharomyces pombe (strain 972 / ATCC 24843) (Fission yeast), this protein is Serine/threonine-protein kinase tel1 (tel1).